We begin with the raw amino-acid sequence, 147 residues long: UPF0178 protein VIBHAR_03247 (147 aa).

This sequence belongs to the UPF0178 family.

This Vibrio campbellii (strain ATCC BAA-1116) protein is UPF0178 protein VIBHAR_03247.